We begin with the raw amino-acid sequence, 236 residues long: Pyridoxal phosphate homeostasis protein (236 aa).

Lysine 36 bears the N6-(pyridoxal phosphate)lysine mark.

It belongs to the pyridoxal phosphate-binding protein YggS/PROSC family.

Its function is as follows. Pyridoxal 5'-phosphate (PLP)-binding protein, which is involved in PLP homeostasis. The protein is Pyridoxal phosphate homeostasis protein of Vibrio cholerae serotype O1 (strain ATCC 39315 / El Tor Inaba N16961).